The following is a 179-amino-acid chain: Transcription factor 21 (179 aa).

The interval 19 to 88 (DCDSLKVDSN…VQRNAANARE (70 aa)) is disordered. 2 stretches are compositionally biased toward polar residues: residues 30–49 (EFGT…NGSP) and 70–80 (SGVSQEGKQVQ). In terms of domain architecture, bHLH spans 79–131 (VQRNAANARERARMRVLSKAFSRLKTTLPWVPPDTKLSKLDTLRLASSYIAHL).

Efficient DNA binding requires dimerization with another bHLH protein. Forms a heterodimer with TCF3 and binds the E box (5'-CANNTG-3'). As to expression, expressed at high levels in lung, kidney, gut, heart, ovary and podocytes (visceral glomerular epithelial cells). Also found in spleen, large intestine, uterus, bladder and testis.

Its subcellular location is the nucleus. In terms of biological role, involved in epithelial-mesenchymal interactions in kidney and lung morphogenesis that include epithelial differentiation and branching morphogenesis. May be involved in the organogenesis of the spleen and heart and in cardiac and coronary artery development. May function in the development and sex differentiation of gonad via transcriptional regulation of AD4BP/SF-1. The sequence is that of Transcription factor 21 (Tcf21) from Mus musculus (Mouse).